The sequence spans 119 residues: Large ribosomal subunit protein bL20 (119 aa).

It belongs to the bacterial ribosomal protein bL20 family.

Binds directly to 23S ribosomal RNA and is necessary for the in vitro assembly process of the 50S ribosomal subunit. It is not involved in the protein synthesizing functions of that subunit. The sequence is that of Large ribosomal subunit protein bL20 from Thermoanaerobacter sp. (strain X514).